Consider the following 655-residue polypeptide: MEENIESVEEWVSKLDIETTKDIHVPKLLFDQVIGQDQAGEIVKKAALQRRHVILIGEPGTGKSMLAQSMVDFLPKSELEDILVFPNPEDPNKPKIKTVPAGKGKEIVRQYQIKAEREKRDRSRSIMFVIFSVVLLGIIAAIVLRSITLIFFAIMAAAFLYMAMAFNPVIRNEKAMVPKLLVSHSSTDKPPFVDSTGAHSGALLGDVRHDPFQSGGLETPAHERVEAGNIHKAHKGVLFIDEINLLRPEDQQAILTALQEKKYPISGQSERSAGAMVQTEPVPCDFVLVAAGNYDAIRNMHPALRSRIRGYGYEVVVNDYMDDNDENRKKLVQFIAQEVEKDKKIPHFDKSAIVEIIKEAQKRSGRRNKLTLRLRELGGLVRVAGDIAVSQKRNIVTASDVIAAKALSKPLEQQIADKSIEIKKIYKTFRTEGSVVGMVNGLAVVGADTGMAEYTGVVLPIVAEVTPAEHKGAGNIIATGKLGDIAKEAVLNVSAVFKKITGKDISNMDIHIQFVGTYEGVEGDSASVSIATAVISAIENIPVDQSVAMTGSLSVRGDVLPVGGVTAKVEAAIEAGMAKVIVPELNYNDIILDAEHINRIQIIPARTIEDVLKVALVNSPEKDKLFDRIASIINNAKIIKPQKPVASTRAGQNVA.

At 1–123 the chain is on the cytoplasmic side; the sequence is MEENIESVEE…KAEREKRDRS (123 aa). An ATP-binding site is contributed by 57 to 64; that stretch reads GEPGTGKS. The helical transmembrane segment at 124 to 144 threads the bilayer; sequence RSIMFVIFSVVLLGIIAAIVL. Position 145 (arginine 145) is a topological domain, extracellular. The chain crosses the membrane as a helical span at residues 146–166; the sequence is SITLIFFAIMAAAFLYMAMAF. At 167–655 the chain is on the cytoplasmic side; that stretch reads NPVIRNEKAM…ASTRAGQNVA (489 aa). One can recognise a Lon proteolytic domain in the interval 433 to 618; the sequence is GSVVGMVNGL…EDVLKVALVN (186 aa). Catalysis depends on residues serine 525 and lysine 568.

It belongs to the peptidase S16 family. Archaeal LonB subfamily. As to quaternary structure, homohexamer. Organized in a ring with a central cavity.

It localises to the cell membrane. ATP-dependent serine protease that mediates the selective degradation of mutant and abnormal proteins as well as certain short-lived regulatory proteins. Degrades polypeptides processively. This Thermoplasma volcanium (strain ATCC 51530 / DSM 4299 / JCM 9571 / NBRC 15438 / GSS1) protein is Archaeal Lon protease.